Consider the following 218-residue polypeptide: UPF0173 metal-dependent hydrolase Mpal_1063 (218 aa).

Belongs to the UPF0173 family.

In Methanosphaerula palustris (strain ATCC BAA-1556 / DSM 19958 / E1-9c), this protein is UPF0173 metal-dependent hydrolase Mpal_1063.